Reading from the N-terminus, the 1862-residue chain is Chitin synthase V (1862 aa).

The tract at residues 1 to 26 (MAMSLPQLGGAGGPHTQPSLPSLPAH) is disordered. Residues 1-778 (MAMSLPQLGG…CWMEIAQLGE (778 aa)) form the Myosin motor domain. The N-linked (GlcNAc...) asparagine glycan is linked to asparagine 63. An ATP-binding site is contributed by 104–111 (GESGAGKS). N-linked (GlcNAc...) asparagine glycosylation is found at asparagine 123, asparagine 429, asparagine 483, asparagine 522, and asparagine 560. Residues 592 to 643 (TVSSKPMRAPSVMSRKTHRTGRPSTAYKRQQQEAMEELDQQSQAGESKKNAK) form a disordered region. The interval 658–682 (LDNVQKAVTDPGTNSYFVFCLKPND) is actin-binding. Helical transmembrane passes span 884-904 (WVALVFFLTWFIPDFAIRLIG) and 923-943 (MLIWLMCAVAAFFMVGFPMLI). The region spanning 947–1009 (QYVYSSNELS…YAGKDISALF (63 aa)) is the Cytochrome b5 heme-binding domain. Residues asparagine 1036, asparagine 1063, and asparagine 1192 are each glycosylated (N-linked (GlcNAc...) asparagine). A helical membrane pass occupies residues 1202–1222 (FILAISVMLASILVFKFLAAL). 2 N-linked (GlcNAc...) asparagine glycosylation sites follow: asparagine 1459 and asparagine 1565. Helical transmembrane passes span 1590-1610 (FVVFIDLLSTIVQPVIVMYIV), 1623-1643 (VPITAFLLLGAIYGLQAVIFI), and 1650-1670 (MVGWMIMYIAAIPVFSFGLPL). Asparagine 1771 is a glycosylation site (N-linked (GlcNAc...) asparagine). The region spanning 1804–1859 (MPSDDALLAEIRDILKTADLMTVTKKGIKQELERRFNVPLDAKRAYINSATEALLS) is the DEK-C domain.

This sequence in the N-terminal section; belongs to the TRAFAC class myosin-kinesin ATPase superfamily. Myosin family. In the C-terminal section; belongs to the chitin synthase family. Class V subfamily.

The protein localises to the cell membrane. It carries out the reaction [(1-&gt;4)-N-acetyl-beta-D-glucosaminyl](n) + UDP-N-acetyl-alpha-D-glucosamine = [(1-&gt;4)-N-acetyl-beta-D-glucosaminyl](n+1) + UDP + H(+). Its function is as follows. Polymerizes chitin, a structural polymer of the cell wall and septum, by transferring the sugar moiety of UDP-GlcNAc to the non-reducing end of the growing chitin polymer. ChsV and chsVb do perform additive, but not redundant, functions in septum formation. Involved in cell wall integrity and resistance to antimicrobial plant defense compounds such as the tomato phytoanticipin alpha-tomatine or H(2)O(2), and plays a crucial role in vascular colonization and pathogenicity. Also plays an important role in nuclear sorting or distribution. In Fusarium oxysporum f. sp. lycopersici (strain 4287 / CBS 123668 / FGSC 9935 / NRRL 34936) (Fusarium vascular wilt of tomato), this protein is Chitin synthase V.